Here is a 376-residue protein sequence, read N- to C-terminus: Pre-mRNA-splicing factor cwf25 (376 aa).

The stretch at 25 to 60 (KDEQAHKEEMKRVEQLRREIEEERQLLELHRLQEAA) forms a coiled coil. Disordered regions lie at residues 153–211 (LMEK…DRNN) and 258–289 (RTSRQYSRSPSPDFRTRNHQFHSRDSQPITQR). Basic and acidic residues predominate over residues 154–167 (MEKRKYSLDSDRKS). Over residues 168-178 (KERRHRDRHHR) the composition is skewed to basic residues. Residues 179–199 (SNQDRSRERSDNEQHSSDKRE) are compositionally biased toward basic and acidic residues. A phosphoserine mark is found at Ser-266 and Ser-268. Residues 286 to 334 (ITQRHTDIESRLQKMQDNAKELDESRRKKIELLEKKERDEEQFLEKERR) are a coiled coil.

Belongs to the CWC25 family. Belongs to the 40S cdc5-associated complex (or cwf complex), a spliceosome sub-complex reminiscent of a late-stage spliceosome composed of the U2, U5 and U6 snRNAs and at least brr2, cdc5, cwf2/prp3, cwf3/syf1, cwf4/syf3, cwf5/ecm2, spp42/cwf6, cwf7/spf27, cwf8, cwf9, cwf10, cwf11, cwf12, prp45/cwf13, cwf14, cwf15, cwf16, cwf17, cwf18, cwf19, cwf20, cwf21, cwf22, cwf23, cwf24, cwf25, cwf26, cyp7/cwf27, cwf28, cwf29/ist3, lea1, msl1, prp5/cwf1, prp10, prp12/sap130, prp17, prp22, sap61, sap62, sap114, sap145, slu7, smb1, smd1, smd3, smf1, smg1 and syf2.

The protein resides in the nucleus. Involved in mRNA splicing. The protein is Pre-mRNA-splicing factor cwf25 (cwf25) of Schizosaccharomyces pombe (strain 972 / ATCC 24843) (Fission yeast).